A 199-amino-acid polypeptide reads, in one-letter code: dITP/XTP pyrophosphatase (199 aa).

Residue Ser8–Lys13 coordinates substrate. Asp69 (proton acceptor) is an active-site residue. Asp69 provides a ligand contact to Mg(2+). Substrate is bound by residues Ser70, Phe154–Asn157, Lys177, and His182–Arg183.

This sequence belongs to the HAM1 NTPase family. Homodimer. Requires Mg(2+) as cofactor.

It catalyses the reaction XTP + H2O = XMP + diphosphate + H(+). The catalysed reaction is dITP + H2O = dIMP + diphosphate + H(+). It carries out the reaction ITP + H2O = IMP + diphosphate + H(+). Its function is as follows. Pyrophosphatase that catalyzes the hydrolysis of nucleoside triphosphates to their monophosphate derivatives, with a high preference for the non-canonical purine nucleotides XTP (xanthosine triphosphate), dITP (deoxyinosine triphosphate) and ITP. Seems to function as a house-cleaning enzyme that removes non-canonical purine nucleotides from the nucleotide pool, thus preventing their incorporation into DNA/RNA and avoiding chromosomal lesions. The sequence is that of dITP/XTP pyrophosphatase from Xanthomonas campestris pv. campestris (strain 8004).